The sequence spans 474 residues: tRNA-2-methylthio-N(6)-dimethylallyladenosine synthase (474 aa).

One can recognise an MTTase N-terminal domain in the interval 3–120 (KKLHIKTWGC…LPEMINHVQG (118 aa)). The [4Fe-4S] cluster site is built by cysteine 12, cysteine 49, cysteine 83, cysteine 157, cysteine 161, and cysteine 164. In terms of domain architecture, Radical SAM core spans 143–375 (RAEGPTAFVS…QQRISQQAME (233 aa)). Residues 378-441 (RKMVGTVQRV…ASSLRGILLR (64 aa)) form the TRAM domain.

The protein belongs to the methylthiotransferase family. MiaB subfamily. As to quaternary structure, monomer. [4Fe-4S] cluster is required as a cofactor.

It is found in the cytoplasm. The enzyme catalyses N(6)-dimethylallyladenosine(37) in tRNA + (sulfur carrier)-SH + AH2 + 2 S-adenosyl-L-methionine = 2-methylsulfanyl-N(6)-dimethylallyladenosine(37) in tRNA + (sulfur carrier)-H + 5'-deoxyadenosine + L-methionine + A + S-adenosyl-L-homocysteine + 2 H(+). Its function is as follows. Catalyzes the methylthiolation of N6-(dimethylallyl)adenosine (i(6)A), leading to the formation of 2-methylthio-N6-(dimethylallyl)adenosine (ms(2)i(6)A) at position 37 in tRNAs that read codons beginning with uridine. The chain is tRNA-2-methylthio-N(6)-dimethylallyladenosine synthase from Yersinia pestis bv. Antiqua (strain Angola).